Consider the following 287-residue polypeptide: Pantothenate synthetase (287 aa).

Residue 30-37 (MGALHSGH) coordinates ATP. His37 serves as the catalytic Proton donor. Gln61 lines the (R)-pantoate pocket. Gln61 is a binding site for beta-alanine. Residue 152-155 (GQKD) participates in ATP binding. Residue Gln158 coordinates (R)-pantoate. ATP is bound by residues Ile181 and 189–192 (ESSR).

This sequence belongs to the pantothenate synthetase family. As to quaternary structure, homodimer.

It localises to the cytoplasm. It catalyses the reaction (R)-pantoate + beta-alanine + ATP = (R)-pantothenate + AMP + diphosphate + H(+). It functions in the pathway cofactor biosynthesis; (R)-pantothenate biosynthesis; (R)-pantothenate from (R)-pantoate and beta-alanine: step 1/1. Catalyzes the condensation of pantoate with beta-alanine in an ATP-dependent reaction via a pantoyl-adenylate intermediate. The sequence is that of Pantothenate synthetase from Corynebacterium efficiens (strain DSM 44549 / YS-314 / AJ 12310 / JCM 11189 / NBRC 100395).